The sequence spans 295 residues: Ribosomal protein L11 methyltransferase (295 aa).

S-adenosyl-L-methionine contacts are provided by threonine 146, glycine 167, aspartate 189, and asparagine 231.

The protein belongs to the methyltransferase superfamily. PrmA family.

It is found in the cytoplasm. It catalyses the reaction L-lysyl-[protein] + 3 S-adenosyl-L-methionine = N(6),N(6),N(6)-trimethyl-L-lysyl-[protein] + 3 S-adenosyl-L-homocysteine + 3 H(+). Functionally, methylates ribosomal protein L11. The polypeptide is Ribosomal protein L11 methyltransferase (Vibrio vulnificus (strain YJ016)).